The following is a 775-amino-acid chain: 5-methyltetrahydropteroyltriglutamate--homocysteine methyltransferase (775 aa).

5-methyltetrahydropteroyltri-L-glutamate contacts are provided by residues 15–18 (RELK) and lysine 118. Residues 448–450 (IGS) and glutamate 501 each bind L-homocysteine. L-methionine contacts are provided by residues 448-450 (IGS) and glutamate 501. Residues 532–533 (RC) and tryptophan 578 contribute to the 5-methyltetrahydropteroyltri-L-glutamate site. Aspartate 616 contacts L-homocysteine. Aspartate 616 provides a ligand contact to L-methionine. Residue glutamate 622 coordinates 5-methyltetrahydropteroyltri-L-glutamate. Histidine 658, cysteine 660, and glutamate 682 together coordinate Zn(2+). Histidine 711 (proton donor) is an active-site residue. Cysteine 743 is a Zn(2+) binding site.

It belongs to the vitamin-B12 independent methionine synthase family. It depends on Zn(2+) as a cofactor.

It carries out the reaction 5-methyltetrahydropteroyltri-L-glutamate + L-homocysteine = tetrahydropteroyltri-L-glutamate + L-methionine. It functions in the pathway amino-acid biosynthesis; L-methionine biosynthesis via de novo pathway; L-methionine from L-homocysteine (MetE route): step 1/1. Its function is as follows. Catalyzes the transfer of a methyl group from 5-methyltetrahydrofolate to homocysteine resulting in methionine formation. This chain is 5-methyltetrahydropteroyltriglutamate--homocysteine methyltransferase, found in Cytophaga hutchinsonii (strain ATCC 33406 / DSM 1761 / CIP 103989 / NBRC 15051 / NCIMB 9469 / D465).